A 229-amino-acid polypeptide reads, in one-letter code: 2,3-bisphosphoglycerate-dependent phosphoglycerate mutase (229 aa).

Residues 8 to 15, 21 to 22, Arg60, 87 to 90, Lys98, 114 to 115, and 183 to 184 each bind substrate; these read RHGKSEWN, TG, ERHY, RR, and GN. His9 serves as the catalytic Tele-phosphohistidine intermediate. Glu87 (proton donor/acceptor) is an active-site residue.

It belongs to the phosphoglycerate mutase family. BPG-dependent PGAM subfamily. Homodimer.

The enzyme catalyses (2R)-2-phosphoglycerate = (2R)-3-phosphoglycerate. Its pathway is carbohydrate degradation; glycolysis; pyruvate from D-glyceraldehyde 3-phosphate: step 3/5. Functionally, catalyzes the interconversion of 2-phosphoglycerate and 3-phosphoglycerate. The chain is 2,3-bisphosphoglycerate-dependent phosphoglycerate mutase from Nautilia profundicola (strain ATCC BAA-1463 / DSM 18972 / AmH).